Consider the following 97-residue polypeptide: Large ribosomal subunit protein bL27 (97 aa).

The segment at 14 to 36 is disordered; that stretch reads HKKGGGSTSNGRDSQAKRLGAKA.

The protein belongs to the bacterial ribosomal protein bL27 family.

This Streptococcus sanguinis (strain SK36) protein is Large ribosomal subunit protein bL27.